A 509-amino-acid chain; its full sequence is Maturase K (509 aa).

This sequence belongs to the intron maturase 2 family. MatK subfamily.

The protein resides in the plastid. It localises to the chloroplast. Its function is as follows. Usually encoded in the trnK tRNA gene intron. Probably assists in splicing its own and other chloroplast group II introns. This chain is Maturase K, found in Nicotiana rustica (Aztec tobacco).